Reading from the N-terminus, the 325-residue chain is uncharacterized protein (325 aa).

The segment at 1–75 (MSQPPEHPGN…PPPGYPTHLQ (75 aa)) is disordered. Composition is skewed to pro residues over residues 24–39 (YPPP…PGYG) and 50–70 (YNAP…PPGY). Transmembrane regions (helical) follow at residues 96–116 (AVTL…VIGA), 153–173 (IVMF…HAGI), 205–225 (LLIV…GLIF), and 273–293 (LVGE…AALI).

Its subcellular location is the cell membrane. This is an uncharacterized protein from Mycobacterium tuberculosis (strain CDC 1551 / Oshkosh).